The primary structure comprises 93 residues: Bacterial microcompartment shell protein PduA (93 aa).

The BMC domain maps to 5–89 (ALGMVETKGL…PHTDVEKILP (85 aa)).

The protein belongs to the bacterial microcompartments protein family. As to quaternary structure, homohexamer with a central pore; Lys-26 and Arg-79 interactions are very important for hexamer symmetry. The hexamers pack against each other in arrays. Interacts individually with shell proteins PduB, PduB', PduJ, PduK, PduN and PduU. Modeling suggests PduC, PduD, PduE, PduL and PduP interact with a cleft formed by the C-terminal segments of 2 adjacent PduA subunits (on the BMC luminal side) in the hexamer.

The protein resides in the bacterial microcompartment. Its pathway is polyol metabolism; 1,2-propanediol degradation. Functionally, one of the major shell proteins of the bacterial microcompartment (BMC) dedicated to 1,2-propanediol (1,2-PD) degradation, probably important for metabolite diffusion into and out of the BMC. Overexpression of a C-terminally mutated form (PduA*) makes thin parallel filaments with a honeycomb-like assembly in cross-section that probably form nanotubes. The filaments interfere with septation. PduA is probably the hub for binding multiple enzymes to the interior of the BMC. At least one of PduA or PduJ is required for BMC assembly; it must be encoded as the first gene in the pdu operon. Its function is as follows. Expression of a cosmid containing the full 21-gene pdu operon in E.coli allows E.coli to grow on 1,2-PD with the appearance of BMCs in its cytoplasm. Overexpression of this protein leads to aberrant intracellular filaments. In terms of biological role, the 1,2-PD-specific bacterial microcompartment (BMC) concentrates low levels of 1,2-PD catabolic enzymes, concentrates volatile reaction intermediates thus enhancing pathway flux and keeps the level of toxic, mutagenic propionaldehyde low. This is Bacterial microcompartment shell protein PduA from Citrobacter freundii.